The chain runs to 98 residues: Small ribosomal subunit protein uS19c (98 aa).

It belongs to the universal ribosomal protein uS19 family.

It is found in the plastid. It localises to the chloroplast. Functionally, protein S19 forms a complex with S13 that binds strongly to the 16S ribosomal RNA. The sequence is that of Small ribosomal subunit protein uS19c from Jasminum nudiflorum (Winter jasmine).